Here is a 223-residue protein sequence, read N- to C-terminus: NLP effector protein 2 (223 aa).

The Conserved undecapeptide motif signature appears at 90–100 (AIMYSWYFPKD). The short motif at 107-113 (GHRHDWE) is the Conserved p motif element.

The protein belongs to the Necrosis inducing protein (NPP1) family.

It localises to the secreted. The protein resides in the host cytoplasm. In terms of biological role, probable secreted effector that may act as a pathogen-associated molecular pattern (PAMP) recognized by the plant immune system. Seems not to induce necrosis, neither in several susceptible or resistant Vitis species nor in the dicot model plant Nicotiana benthamiana. This Plasmopara viticola (Downy mildew of grapevine) protein is NLP effector protein 2.